A 674-amino-acid chain; its full sequence is Zinc finger protein 750 (674 aa).

The CCHC-type zinc-finger motif lies at 25 to 51; it reads YKCFQCPFTCNEKSHLFNHMKYGLCKN. Residues C27, C30, H43, and C49 each contribute to the Zn(2+) site. Disordered regions lie at residues 105–125, 370–466, and 594–674; these read EAKENLDLKNEPKSHAEKTTV, LAKN…QSHS, and TSSP…PRVS. Polar residues-rich tracts occupy residues 401-411 and 444-466; these read SPTNFTQSSQG and DSQTIISRENSPSFGNDGVQSHS.

Its subcellular location is the nucleus. Functionally, transcription factor involved in epidermis differentiation. The polypeptide is Zinc finger protein 750 (znf750) (Xenopus laevis (African clawed frog)).